The sequence spans 287 residues: Pyridoxal kinase PdxY (287 aa).

Substrate-binding positions include Ser-9 and 44–45 (TQ). 3 residues coordinate ATP: Asp-111, Glu-147, and Lys-180. Asp-221 lines the substrate pocket.

Belongs to the pyridoxine kinase family. PdxY subfamily. Homodimer. It depends on Mg(2+) as a cofactor.

It catalyses the reaction pyridoxal + ATP = pyridoxal 5'-phosphate + ADP + H(+). Its pathway is cofactor metabolism; pyridoxal 5'-phosphate salvage; pyridoxal 5'-phosphate from pyridoxal: step 1/1. In terms of biological role, pyridoxal kinase involved in the salvage pathway of pyridoxal 5'-phosphate (PLP). Catalyzes the phosphorylation of pyridoxal to PLP. The sequence is that of Pyridoxal kinase PdxY from Paraburkholderia phymatum (strain DSM 17167 / CIP 108236 / LMG 21445 / STM815) (Burkholderia phymatum).